The chain runs to 236 residues: DNA repair protein RecO (236 aa).

This sequence belongs to the RecO family.

Involved in DNA repair and RecF pathway recombination. This Haemophilus influenzae (strain PittGG) protein is DNA repair protein RecO.